An 813-amino-acid chain; its full sequence is MSEYNFTQIEQQAQEYWRENNSFKAVEDKNKEKFYCLSMLPYPSGTLHMGHVRNYTIGDVIARYQKMQGKNVLHPMGWDAFGLPAENAAIKHKKSPYEWTKSNIAYMRSQLDSLGFSFDWSREVATCDESYYKWEQWFFIQLYKKGLAYRKNSVVNWDPVDQTVLANEQVVDGRGWRSGALIEKKEIPQWFLKITDYADELLKDINQLDGWPEAVKTMQTNWIGKSKGLTVKFKIQNSDKEIEVFTTRPDTLMGVSYLGIAPEHPLALEEAKTNSQLKSFIDECKRISTMEADLATQEKKGFKTSIQAIHPISGETVNVWVANFVLMGYGSGAVMSVPAHDQRDWEFAQKYNIALKQVIKPSDNKSKLDLDKEAFTEKGILINSGEFDGLNFKSAYQAIKKYLFDNDKGYETTNFRIHDWGISRQRYWGCPIPMIHCNDCGLVPEKEENLPVKLPTNVTLTEAGSPLKDIPEFLNVACPNCGKPATRETDTFDTFFESSWYYARYTCPTADKMLSEEANYWLPVDKYIGGIEHAIMHLLYARFFHKLMRDQGLVTSDEPFKNLLTQGMVLKDGAKMSKSKGNTVDPQELIDKYGADTVRLFSMFAAPPEQSLEWSDTGVDGANKFLRKVYNYAYTNKEILAKNITIDVTKLSKNDKKARYEIYANLKQAIFDFDKSQFNTVVSACMKILNTLNNYDNLSDSVKLEGFSILLRILSPFTPHICHYLWQEIGLGEDILHTQFPTVDDIALEKDEFLLVVQINGKVKVKLELDASLTKEQVEQEVLSDEQIKTFIKDKQIVKVIYVPQKLINIVVK.

A 'HIGH' region motif is present at residues 41-51 (PYPSGTLHMGH). A 'KMSKS' region motif is present at residues 575 to 579 (KMSKS). Lysine 578 serves as a coordination point for ATP.

Belongs to the class-I aminoacyl-tRNA synthetase family.

The protein resides in the cytoplasm. It carries out the reaction tRNA(Leu) + L-leucine + ATP = L-leucyl-tRNA(Leu) + AMP + diphosphate. This is Leucine--tRNA ligase from Francisella philomiragia subsp. philomiragia (strain ATCC 25017 / CCUG 19701 / FSC 153 / O#319-036).